Here is a 108-residue protein sequence, read N- to C-terminus: Large ribosomal subunit protein bL31B (108 aa).

Residues 86–108 form a disordered region; sequence KPETVVEDVLPKGKKKSPAKKKK. Positions 97 to 108 are enriched in basic residues; sequence KGKKKSPAKKKK.

It belongs to the bacterial ribosomal protein bL31 family. Type B subfamily. Part of the 50S ribosomal subunit.

This chain is Large ribosomal subunit protein bL31B, found in Chlamydia trachomatis serovar L2 (strain ATCC VR-902B / DSM 19102 / 434/Bu).